The chain runs to 841 residues: Protein NLP6 (841 aa).

The region spanning 539 to 624 (EAKTVKKSER…IDSVQGADGS (86 aa)) is the RWP-RK domain. The interval 649–682 (NCPPTSTSPLSNLQDVKIENRDAEDSAGSSTSRA) is disordered. Residues 651-662 (PPTSTSPLSNLQ) are compositionally biased toward polar residues. The PB1 domain occupies 741-823 (LVSIKATYRE…NTLRLSVHDV (83 aa)).

It is found in the nucleus. Probable transcription factor. This is Protein NLP6 (NLP6) from Arabidopsis thaliana (Mouse-ear cress).